We begin with the raw amino-acid sequence, 418 residues long: Equilibrative nucleotide transporter 4 (418 aa).

11 helical membrane passes run 20 to 40 (MVVCCILGIGSLFSWNSMLTI), 54 to 74 (SRVFTLIYQPIALGTIMILAY), 85 to 105 (ILTGYILFTISTFLLIVLDLT), 108 to 128 (GHGGIGHYIVLCTIVASFGLA), 147 to 169 (LIQSYMAGSGMAGALTSVLRLIT), 186 to 206 (IFLAISTFIELLCVILYAYVF), 264 to 284 (HAVNLFLIYVLTLSIFPGFLY), 291 to 311 (GLGDWYALILVATYNFWDLFG), 326 to 346 (KALTIAVLTRYFLVPAFYFTA), 353 to 373 (WMIMLVSILGLTTGHLTVCIM), and 392 to 412 (LVVFILGGAVVGISLGWLWLI).

This sequence belongs to the SLC29A/ENT transporter (TC 2.A.57) family. In terms of tissue distribution, expressed in leaves and at lowe levels in stems and flowers.

It is found in the cell membrane. In terms of biological role, nucleoside transporter that can mediate uptake of adenosine, uridine, guanosine or cytidine when expressed in a heterologous system (yeast). This Arabidopsis thaliana (Mouse-ear cress) protein is Equilibrative nucleotide transporter 4 (ENT4).